A 297-amino-acid chain; its full sequence is uncharacterized protein (297 aa).

Glu-46 is an active-site residue.

It belongs to the PhzF family. Homodimer and homotetramer.

This is an uncharacterized protein from Escherichia coli O157:H7.